Consider the following 368-residue polypeptide: MEVDNVKPSSSVPQRNWEKENNVQNVDSIFEYNNKQQVEIRNAKPWDKDPHYFKQIKISAIALLKMTMHAKRGGNLEIMGLLQGRIDANSFIILDVFALPVEGTETRVNAQAQAYEYMTVYSEMCDTEGRKEKVVGWYHSHPGYGCWLSGIDVSTQTLNQKFQEPWVAIVIDPLRTMSAGKVDIGAFRTYPEGYRPPDDVPSEYQSIPLAKIEDFGVHCKRYYSLDVSFFKSQLDAHILTSLWNSYWISTLSSSPLFSNVEFLNNQIQDINQKLSAVDKKLQLNDRSVDGHEALMKVVTDAKAVGDELETGRISHLVKQLLFARQAGGGCGCSHASAGSPMDIAVATEPEKAGPSPSAPEPAVEMADA.

The 138-residue stretch at 56–193 (IKISAIALLK…IGAFRTYPEG (138 aa)) folds into the MPN domain. Zn(2+) contacts are provided by His139, His141, and Asp152. Positions 139 to 152 (HSHPGYGCWLSGID) match the JAMM motif motif. The interval 347-368 (TEPEKAGPSPSAPEPAVEMADA) is disordered.

The protein belongs to the peptidase M67A family. CSN5 subfamily. As to quaternary structure, component of the CSN complex, probably composed of csn-1, csn-2, csn-3, csn-4, csn-5, csn-6 and csn-7. Within the complex it probably interacts directly with csn-1. Interacts with glh-1 and glh-3. Interacts with lag-1. Interacts with kgb-1. Requires a divalent metal cation as cofactor.

It localises to the cytoplasm. It is found in the nucleus. Functionally, probable protease subunit of the COP9 signalosome complex (CSN), a complex involved in various cellular and developmental processes. The CSN complex is an essential regulator of the ubiquitin (Ubl) conjugation pathway by mediating the deneddylation of the cullin subunits of the SCF-type E3 ligase complexes, leading to decrease the Ubl ligase activity of SCF. In the complex, it probably acts as the catalytic center that mediates the cleavage of Nedd8 from cullins. It however has no metalloprotease activity by itself and requires the other subunits of the CSN complex. The CSN complex plays an essential role in embryogenesis and oogenesis and is required to regulate microtubule stability in the early embryo. Mediates mei-3/katanin targeting for degradation at the meiosis to mitosis transition via deneddylation of cul-3. May stabilize glh-1 protein levels by antagonizing kgb-1. This is COP9 signalosome complex subunit 5 (csn-5) from Caenorhabditis elegans.